A 187-amino-acid chain; its full sequence is Pyridoxal 5'-phosphate synthase subunit PdxT (187 aa).

47–49 provides a ligand contact to L-glutamine; the sequence is GES. The active-site Nucleophile is the C76. L-glutamine is bound by residues R102 and 128–129; that span reads IR. Catalysis depends on charge relay system residues H165 and E167.

This sequence belongs to the glutaminase PdxT/SNO family. In terms of assembly, in the presence of PdxS, forms a dodecamer of heterodimers. Only shows activity in the heterodimer.

It catalyses the reaction aldehydo-D-ribose 5-phosphate + D-glyceraldehyde 3-phosphate + L-glutamine = pyridoxal 5'-phosphate + L-glutamate + phosphate + 3 H2O + H(+). The enzyme catalyses L-glutamine + H2O = L-glutamate + NH4(+). It participates in cofactor biosynthesis; pyridoxal 5'-phosphate biosynthesis. Its function is as follows. Catalyzes the hydrolysis of glutamine to glutamate and ammonia as part of the biosynthesis of pyridoxal 5'-phosphate. The resulting ammonia molecule is channeled to the active site of PdxS. This is Pyridoxal 5'-phosphate synthase subunit PdxT from Methanococcus maripaludis (strain C5 / ATCC BAA-1333).